The sequence spans 310 residues: Fucose-specific lectin (310 aa).

6 repeat units span residues 1-53, 54-103, 104-151, 152-209, 210-256, and 257-310. The interval 1–310 is 6 X approximate tandem repeats; the sequence is MSTPGAQEVL…LGRRALPPAE (310 aa). 16 residues coordinate beta-L-fucose: R25, E37, W44, R73, E85, W94, R126, E138, W146, R177, Q189, W198, R230, Q242, R277, and E291.

The protein belongs to the fungal fucose-specific lectin family.

Its function is as follows. Lectin that specifically binds to L-fucose and weakly reacts with mannose and N-acetyl-neuraminic acid. Has strongest preference for the alpha-1,6-fucosylated chain (core fucose) on glycoproteins among alpha-1,2-, alpha-1,3-, alpha-1,4-, and alpha-1,6-fucosylated chains. Binds to fucose residues of IgE in mice and human, causing antigen-independent IgE-mediated mast cell activation and anaphylactoid reactions in mice and is possibly implicated in allergic response to Aspergillus oryzae in humans. Induces secretion of pro-inflammatory cytokines IL6 and IL8 implicated in ocular diseases such as mycotic keratitis, probably through its interaction with host toll-like receptors TLR2 and TLR4, followed by up-regulation of pro-inflammatory cytokines. This chain is Fucose-specific lectin, found in Aspergillus oryzae (Yellow koji mold).